Consider the following 169-residue polypeptide: 6,7-dimethyl-8-ribityllumazine synthase (169 aa).

5-amino-6-(D-ribitylamino)uracil is bound by residues Tyr-30, 61–63, and 90–92; these read ALE and CVI. 95 to 96 lines the (2S)-2-hydroxy-3-oxobutyl phosphate pocket; the sequence is ET. His-98 (proton donor) is an active-site residue. Residue Asn-123 participates in 5-amino-6-(D-ribitylamino)uracil binding. Arg-137 contacts (2S)-2-hydroxy-3-oxobutyl phosphate.

Belongs to the DMRL synthase family.

The enzyme catalyses (2S)-2-hydroxy-3-oxobutyl phosphate + 5-amino-6-(D-ribitylamino)uracil = 6,7-dimethyl-8-(1-D-ribityl)lumazine + phosphate + 2 H2O + H(+). It functions in the pathway cofactor biosynthesis; riboflavin biosynthesis; riboflavin from 2-hydroxy-3-oxobutyl phosphate and 5-amino-6-(D-ribitylamino)uracil: step 1/2. Functionally, catalyzes the formation of 6,7-dimethyl-8-ribityllumazine by condensation of 5-amino-6-(D-ribitylamino)uracil with 3,4-dihydroxy-2-butanone 4-phosphate. This is the penultimate step in the biosynthesis of riboflavin. This chain is 6,7-dimethyl-8-ribityllumazine synthase, found in Methylorubrum populi (strain ATCC BAA-705 / NCIMB 13946 / BJ001) (Methylobacterium populi).